Consider the following 187-residue polypeptide: HTH-type dhaKLM operon transcriptional activator DhaS (187 aa).

One can recognise an HTH tetR-type domain in the interval 12-72; sequence IITQKIIAKA…WIFENDFAEL (61 aa). A DNA-binding region (H-T-H motif) is located at residues 35-54; the sequence is SVSDIMQTAKIRRQTFYNYF.

As to quaternary structure, homodimer. Interacts with a homodimer of DhaQ.

Functionally, in complex with DhaQ, upon activation by dihydroxyacetone, activates transcription of the dhaKLM operon. Binds the inverted repeat sequence 5'-GGACACATN(6)ATTTGTCC-3' located upstream of and partially overlapping with the -35 promoter sequence of the dhaKLM operon promoter. The chain is HTH-type dhaKLM operon transcriptional activator DhaS (dhaS) from Lactococcus lactis subsp. lactis (strain IL1403) (Streptococcus lactis).